We begin with the raw amino-acid sequence, 96 residues long: Cysteine protease immunity 1 (96 aa).

The chain is Cysteine protease immunity 1 from Escherichia coli O1:K1:H7 (strain ATCC 11775 / DSM 30083 / JCM 1649 / NBRC 102203 / NCTC 9001 / U5/41).